We begin with the raw amino-acid sequence, 757 residues long: RNA-directed RNA polymerase catalytic subunit (757 aa).

The disordered stretch occupies residues 50–82 (SEKGKWTTNTETGAPQLNPIDGPLPEDNEPSGY). Over residues 55-64 (WTTNTETGAP) the composition is skewed to polar residues. 2 consecutive short sequence motifs (nuclear localization signal) follow at residues 187-195 (RKRRVRDNM) and 203-216 (RTIGKKKQRVNKRS). The promoter-binding site stretch occupies residues 249 to 256 (RGFVYFVE). In terms of domain architecture, RdRp catalytic spans 286–483 (VRKMMTNSQD…GINMSKKKSY (198 aa)).

It belongs to the influenza viruses polymerase PB1 family. As to quaternary structure, influenza RNA polymerase is composed of three subunits: PB1, PB2 and PA. Interacts (via N-terminus) with PA (via C-terminus). Interacts (via C-terminus) with PB2 (via N-terminus); this interaction is essential for transcription initiation. Interacts (via C-terminus) with human PKP2 (via N-terminus); the interaction competitively inhibits the interaction between the RNA polymerase subunits PB1 and PB2. Post-translationally, phosphorylated by host PRKCA.

The protein resides in the host nucleus. Its subcellular location is the host cytoplasm. The catalysed reaction is RNA(n) + a ribonucleoside 5'-triphosphate = RNA(n+1) + diphosphate. In terms of biological role, RNA-dependent RNA polymerase which is responsible for replication and transcription of virus RNA segments. The transcription of viral mRNAs occurs by a unique mechanism called cap-snatching. 5' methylated caps of cellular mRNAs are cleaved after 10-13 nucleotides by PA. In turn, these short capped RNAs are used as primers by PB1 for transcription of viral mRNAs. During virus replication, PB1 initiates RNA synthesis and copy vRNA into complementary RNA (cRNA) which in turn serves as a template for the production of more vRNAs. This is RNA-directed RNA polymerase catalytic subunit from Influenza A virus (strain A/Kiev/59/1979 H1N1).